The following is a 68-amino-acid chain: uncharacterized protein (68 aa).

The signal sequence occupies residues 1 to 28 (MNKEQSADDPSVDLIRVKNMLNSTISMS).

This is an uncharacterized protein from Escherichia coli (strain K12).